A 398-amino-acid chain; its full sequence is Tryptophan synthase beta chain (398 aa).

Residue Lys-88 is modified to N6-(pyridoxal phosphate)lysine.

Belongs to the TrpB family. In terms of assembly, tetramer of two alpha and two beta chains. Pyridoxal 5'-phosphate is required as a cofactor.

It catalyses the reaction (1S,2R)-1-C-(indol-3-yl)glycerol 3-phosphate + L-serine = D-glyceraldehyde 3-phosphate + L-tryptophan + H2O. The protein operates within amino-acid biosynthesis; L-tryptophan biosynthesis; L-tryptophan from chorismate: step 5/5. Its function is as follows. The beta subunit is responsible for the synthesis of L-tryptophan from indole and L-serine. The chain is Tryptophan synthase beta chain from Mannheimia succiniciproducens (strain KCTC 0769BP / MBEL55E).